The chain runs to 243 residues: Terpene cyclase atmB (243 aa).

A run of 7 helical transmembrane segments spans residues 19 to 39 (IADV…VGMV), 48 to 68 (YGMA…YGLI), 78 to 98 (GVFL…IKFG), 112 to 132 (LPLI…ALAA), 134 to 154 (IGPA…LSVG), 169 to 189 (SYTL…SAWL), and 205 to 225 (LILW…VCFY).

The protein belongs to the paxB family.

It localises to the membrane. Its function is as follows. Terpene cyclase; part of the ATM2 gene cluster that mediates the biosynthesis of aflatrem, a tremorgenic mycotoxin with acute neurotoxic effects. Synthesis of geranylgeranyl diphosphate (GGPP) by AtmG (a GGPP synthase) precedes condensation of GGPP with indole 3-glycerol phosphate, followed by epoxidation and cyclization by AtmM (a FAD-dependent monooxygenase) and AtmC (a prenyltransferase) to produce paspaline. AtmB is also essential for paspaline production, but its exact role has not been identified yet. AtmP, a cytochrome P450 monooxygenase, subsequently converts paspaline to 13-desoxypaxilline via PC-M6 by removal of the C-30 methyl group and oxidation at C-10. AtmQ, a cytochrome P450 monooxygenase, then catalyzes the oxidation of 13-desoxypaxilline, first at C-7 to produce paspalicine and then at C-13 to form paspalinine. Finally, AtmD prenylates paspalinine to form aflatrem. The chain is Terpene cyclase atmB from Aspergillus flavus.